The sequence spans 620 residues: MGKIIGIDLGTTNSCVAVMEGGKPVVIANTEGSRTTPSVVAFTKTGERIVGEPAKRQAVTNADKTISSIKRHMGTDFRVSIDDKKFTPQEISAMVLQKLKADAEGYLGEKISEAVITVPAYFNDAQRQATKDAGKIAGLDVKRIINEPTAAALAYGLDNEHEQKIMVYDLGGGTFDVSIIEIGDGVIEVLATSGDNRLGGDDFDERVTRYFIDEFKKAEGVDLSTDKMALQRLREAAEKAKKELSSATTTNINLPFITATSEGPKHFDLNLTRAKFDELTHDLVERTAIPVQNALRDAGLAPSELGKVLLVGGSTRIPAVQDKVKQLTGHEPSKSLNPDECVAIGASVQGGKLAGDTGAGDILLLDVTPLSLSIETMGGIATRLIERNTTIPSKKSQIFSTAADNQTAVDINVVQGERQFAKDNKSLGQFRLDGIPPARRGIPQIEVTFDIDANGIVNVSAKDLGTGKEQHITITAGSNMSDSDIDKAVREAAEYEAQDKKRKDAVDTRNDADSIVFQTEKALSEVGDKVSADEKTAVEADLNHLKDLVAKANPEVMSEGEVEDMKAAKEKLMNSAQALFAKLYESAQGAAGAGPDMSGAGPQGDTYAGDDVVDGDYREV.

A Phosphothreonine; by autocatalysis modification is found at threonine 174. The segment at 590–620 (AAGAGPDMSGAGPQGDTYAGDDVVDGDYREV) is disordered.

This sequence belongs to the heat shock protein 70 family.

Acts as a chaperone. The protein is Chaperone protein DnaK of Lachnoclostridium phytofermentans (strain ATCC 700394 / DSM 18823 / ISDg) (Clostridium phytofermentans).